We begin with the raw amino-acid sequence, 380 residues long: Gonadotropin-releasing hormone II receptor (380 aa).

Residues 1–40 lie on the Extracellular side of the membrane; that stretch reads MSAVNGTPWGSSAREEVWAGSGVEVEGSELPTFSTAAKVR. Residues 41–60 traverse the membrane as a helical segment; sequence VGVTIVLFVSSAGGNLAVLW. Residues 61 to 76 lie on the Cytoplasmic side of the membrane; it reads SVTRPQPSQLRPSPVR. A helical membrane pass occupies residues 77–96; it reads RLFAHLAAADLLVTFVVMPL. At 97–114 the chain is on the extracellular side; that stretch reads DATWNITVQWLAGDIACR. N-linked (GlcNAc...) asparagine glycosylation is present at Asn101. Cysteines 113 and 188 form a disulfide. The chain crosses the membrane as a helical span at residues 115-136; that stretch reads TLMFLKLMAMYAAAFLPVVIGL. Residues 137 to 160 are Cytoplasmic-facing; the sequence is DRQAAVLNPLGSRSGVRKLLGAAW. The helical transmembrane segment at 161 to 178 threads the bilayer; it reads GLSFLLALPQLFLFHTVH. At 179–204 the chain is on the extracellular side; it reads RAGPVPFTQCATKGSFKARWQETTYN. The chain crosses the membrane as a helical span at residues 205-224; the sequence is LFTFCCLFLLPLTAMAICYS. The Cytoplasmic portion of the chain corresponds to 225-278; that stretch reads RIVLGVSSPRTRKGSHAPAGEFALRRSFDNRPRVRLRALRLALLVLLTFILCWT. The chain crosses the membrane as a helical span at residues 279–297; that stretch reads PYYLLGLWYWFSPSMLSEV. Topologically, residues 298-303 are extracellular; that stretch reads PPSLSH. A helical membrane pass occupies residues 304–323; that stretch reads ILFLFGLLNAPLDPLLYGAF. Residues 324–380 lie on the Cytoplasmic side of the membrane; that stretch reads TLGCRRGHQELSMDSSREEGSRRMFQQDIQALRQTEVQKTVTSRKAGETKDIPITSI.

The protein belongs to the G-protein coupled receptor 1 family. Post-translationally, phosphorylated on the C-terminal cytoplasmic tail.

The protein localises to the cell membrane. Functionally, receptor for gonadotropin releasing hormone II (GnRH II). This receptor mediates its action by association with G proteins that activate a phosphatidylinositol-calcium second messenger system. The polypeptide is Gonadotropin-releasing hormone II receptor (GNRHR2) (Callithrix jacchus (White-tufted-ear marmoset)).